The primary structure comprises 200 residues: Molybdenum cofactor guanylyltransferase (200 aa).

GTP contacts are provided by residues 15–17 (LAG), Lys28, Asp74, and Asp104. Asp104 is a Mg(2+) binding site.

The protein belongs to the MobA family. Monomer. Mg(2+) serves as cofactor.

The protein resides in the cytoplasm. The enzyme catalyses Mo-molybdopterin + GTP + H(+) = Mo-molybdopterin guanine dinucleotide + diphosphate. Its function is as follows. Transfers a GMP moiety from GTP to Mo-molybdopterin (Mo-MPT) cofactor (Moco or molybdenum cofactor) to form Mo-molybdopterin guanine dinucleotide (Mo-MGD) cofactor. The chain is Molybdenum cofactor guanylyltransferase from Pseudomonas fluorescens (strain Pf0-1).